The primary structure comprises 1588 residues: Pentafunctional AROM polypeptide (1588 aa).

Residues 1–392 (MVQLAKVPIL…YGDSAQFVSD (392 aa)) form a 3-dehydroquinate synthase region. NAD(+) contacts are provided by residues 43 to 45 (DTN), 78 to 81 (ETSK), 109 to 111 (GGV), and aspartate 114. Residue arginine 125 participates in 7-phospho-2-dehydro-3-deoxy-D-arabino-heptonate binding. An NAD(+)-binding site is contributed by 134 to 135 (TS). 7-phospho-2-dehydro-3-deoxy-D-arabino-heptonate contacts are provided by aspartate 141 and lysine 147. Lysine 156 lines the NAD(+) pocket. Asparagine 157 lines the 7-phospho-2-dehydro-3-deoxy-D-arabino-heptonate pocket. Residues 174–177 (WLET) and asparagine 185 each bind NAD(+). Residue glutamate 189 coordinates Zn(2+). Residues 189 to 192 (EVIK) and lysine 258 contribute to the 7-phospho-2-dehydro-3-deoxy-D-arabino-heptonate site. The active-site Proton acceptor; for 3-dehydroquinate synthase activity is the glutamate 268. Residues 272-276 (RNLLN) and histidine 279 each bind 7-phospho-2-dehydro-3-deoxy-D-arabino-heptonate. Histidine 279 is a binding site for Zn(2+). Histidine 283 acts as the Proton acceptor; for 3-dehydroquinate synthase activity in catalysis. 2 residues coordinate 7-phospho-2-dehydro-3-deoxy-D-arabino-heptonate: histidine 295 and lysine 364. A Zn(2+)-binding site is contributed by histidine 295. The interval 405–871 (VYPFKDIPAD…WDVLHSELGA (467 aa)) is EPSP synthase. The active-site For EPSP synthase activity is cysteine 853. Positions 890-1080 (SVVIIGMRAA…IPSGRSAFVC (191 aa)) are shikimate kinase. Residue 895 to 902 (GMRAAGKT) coordinates ATP. The interval 1081–1293 (LTFDDLTEQT…AAPGQLTVAQ (213 aa)) is 3-dehydroquinase. Histidine 1198 serves as the catalytic Proton acceptor; for 3-dehydroquinate dehydratase activity. Lysine 1227 acts as the Schiff-base intermediate with substrate; for 3-dehydroquinate dehydratase activity in catalysis. The segment at 1306 to 1588 (PKELFVVGKP…KAIFDAVTKE (283 aa)) is shikimate dehydrogenase.

The protein in the N-terminal section; belongs to the sugar phosphate cyclases superfamily. Dehydroquinate synthase family. In the 2nd section; belongs to the EPSP synthase family. It in the 3rd section; belongs to the shikimate kinase family. This sequence in the 4th section; belongs to the type-I 3-dehydroquinase family. The protein in the C-terminal section; belongs to the shikimate dehydrogenase family. Homodimer. It depends on Zn(2+) as a cofactor.

The protein localises to the cytoplasm. It carries out the reaction 7-phospho-2-dehydro-3-deoxy-D-arabino-heptonate = 3-dehydroquinate + phosphate. The enzyme catalyses 3-dehydroquinate = 3-dehydroshikimate + H2O. The catalysed reaction is shikimate + NADP(+) = 3-dehydroshikimate + NADPH + H(+). It catalyses the reaction shikimate + ATP = 3-phosphoshikimate + ADP + H(+). It carries out the reaction 3-phosphoshikimate + phosphoenolpyruvate = 5-O-(1-carboxyvinyl)-3-phosphoshikimate + phosphate. It participates in metabolic intermediate biosynthesis; chorismate biosynthesis; chorismate from D-erythrose 4-phosphate and phosphoenolpyruvate: step 2/7. It functions in the pathway metabolic intermediate biosynthesis; chorismate biosynthesis; chorismate from D-erythrose 4-phosphate and phosphoenolpyruvate: step 3/7. The protein operates within metabolic intermediate biosynthesis; chorismate biosynthesis; chorismate from D-erythrose 4-phosphate and phosphoenolpyruvate: step 4/7. Its pathway is metabolic intermediate biosynthesis; chorismate biosynthesis; chorismate from D-erythrose 4-phosphate and phosphoenolpyruvate: step 5/7. It participates in metabolic intermediate biosynthesis; chorismate biosynthesis; chorismate from D-erythrose 4-phosphate and phosphoenolpyruvate: step 6/7. Its function is as follows. The AROM polypeptide catalyzes 5 consecutive enzymatic reactions in prechorismate polyaromatic amino acid biosynthesis. The protein is Pentafunctional AROM polypeptide of Saccharomyces cerevisiae (strain ATCC 204508 / S288c) (Baker's yeast).